A 1148-amino-acid polypeptide reads, in one-letter code: Zinc finger CCCH domain-containing protein 18 (1148 aa).

The span at 1–13 (MDTPESPTQSPQS) shows a compositional bias: low complexity. 3 disordered regions span residues 1-315 (MDTP…PMDR), 380-417 (DPFSPNGAPPGGAAGGGPHPLMPANPWGAPAVEELPPP), and 521-1127 (YTET…REEL). 2 stretches are compositionally biased toward basic and acidic residues: residues 53-73 (VPEHGGDSDSEDRDRQPAGRE) and 82-96 (EDYKLDREEREDIHQ). 2 stretches are compositionally biased toward acidic residues: residues 144–156 (ERGDDDEEEEEDE) and 167–176 (ELEEEEDEEE). Positions 190-202 (DLKDESSVSRDLD) are enriched in basic and acidic residues. Acidic residues-rich tracts occupy residues 203–214 (EHELDYDEEVPE) and 233–245 (EDGEDEEEEDEEE). Positions 261-289 (DNRDTPLRKSEDSREGGRRDSFRDKKKEE) are enriched in basic and acidic residues. Residues 290–306 (DDGEIDEGEIDDDDLEE) show a composition bias toward acidic residues. Residues 388–397 (PPGGAAGGGP) show a composition bias toward gly residues. A compositionally biased stretch (basic and acidic residues) spans 530–615 (PDRERERDPR…EKKDEKEKTL (86 aa)). Positions 543–584 (RERERERERDHRERERRQREREREREREREKDSRRRKDEWDR) form a coiled coil. The segment covering 622–631 (NMPPRGPMEP) has biased composition (pro residues). Residues 632–646 (PTKKDMLSVTKRPDE) show a composition bias toward basic and acidic residues. Phosphoserine is present on Ser666. The segment covering 677–740 (SGSSVSLSNS…SRSGSFSSSP (64 aa)) has biased composition (low complexity). Composition is skewed to pro residues over residues 783-800 (KVMPSPSLPEQPGKPPKP) and 807-817 (PPNPRPPGRPP). Residues 818–833 (GPREPREPPNMREGRK) show a composition bias toward basic and acidic residues. 3 stretches are compositionally biased toward low complexity: residues 847–875 (VSGSVSGSSYSGSSSRSRSRSSSASASRS), 882–903 (SLSVSSVSSVSSASSSSSSVRS), and 914–925 (ASPVSSASSRSP). 2 stretches are compositionally biased toward basic and acidic residues: residues 933-964 (DRGPPRERGPNKERGKPPKKDEPFKDERKRVD) and 1012-1029 (QTDRSNRKRYFPSDKERP). Position 1056 is a phosphoserine (Ser1056). Composition is skewed to low complexity over residues 1083-1098 (PAKSSGKGPAAASAAK) and 1107-1119 (GSASGSAPGKPSS). A coiled-coil region spans residues 1118–1146 (SSTLSRREELLKQLKAVEDAIARKRAKIP).

Its subcellular location is the nucleus. This chain is Zinc finger CCCH domain-containing protein 18 (zc3h18), found in Danio rerio (Zebrafish).